A 267-amino-acid polypeptide reads, in one-letter code: Expansin-B10 (267 aa).

The first 22 residues, 1-22 (MASSCLLLACVVAAAMVSAVSC), serve as a signal peptide directing secretion. N-linked (GlcNAc...) asparagine glycosylation occurs at Asn32. An Expansin-like EG45 domain is found at 61 to 167 (GGACGYKDID…RRVRCKYPGE (107 aa)). 3 disulfide bridges follow: Cys64/Cys92, Cys95/Cys162, and Cys100/Cys106. The Expansin-like CBD domain occupies 181–262 (NYFAVLVKYV…NWKANALYKS (82 aa)). The N-linked (GlcNAc...) asparagine glycan is linked to Asn213.

This sequence belongs to the expansin family. Expansin B subfamily.

The protein localises to the secreted. The protein resides in the cell wall. Its subcellular location is the membrane. May cause loosening and extension of plant cell walls by disrupting non-covalent bonding between cellulose microfibrils and matrix glucans. No enzymatic activity has been found. May be required for rapid internodal elongation in deepwater rice during submergence. The chain is Expansin-B10 (EXPB10) from Oryza sativa subsp. japonica (Rice).